The primary structure comprises 847 residues: Protein HIR2 (847 aa).

WD repeat units lie at residues 10–46, 113–153, 155–194, 259–305, and 309–348; these read LHDG…NAAT, KDNE…LKSS, ELKS…TTKL, KFSP…PLFD, and VVNS…LGDV. The segment at 368 to 399 is disordered; the sequence is PFKPKAEEPDTKLPPNKTAQQTTTNSKKQPKA. Positions 384 to 394 are enriched in polar residues; sequence KTAQQTTTNSK. 2 WD repeats span residues 508-548 and 558-597; these read RKDN…IYVT and PMLL…IAFP.

The protein belongs to the WD repeat HIR1 family.

The protein resides in the nucleus. Its function is as follows. Required for replication-independent chromatin assembly and for the periodic repression of histone gene transcription during the cell cycle. In Kluyveromyces lactis (strain ATCC 8585 / CBS 2359 / DSM 70799 / NBRC 1267 / NRRL Y-1140 / WM37) (Yeast), this protein is Protein HIR2 (HIR2).